The sequence spans 110 residues: Small ribosomal subunit protein bS18 (110 aa).

Over residues 1–18 the composition is skewed to low complexity; it reads MSEATTTTTTTSAPRPGG. A disordered region spans residues 1–41; the sequence is MSEATTTTTTTSAPRPGGRPSGPRPDRGPGGPRKKRPFQRR. The segment covering 32-41 has biased composition (basic residues); the sequence is PRKKRPFQRR.

Belongs to the bacterial ribosomal protein bS18 family. In terms of assembly, part of the 30S ribosomal subunit. Forms a tight heterodimer with protein bS6.

Binds as a heterodimer with protein bS6 to the central domain of the 16S rRNA, where it helps stabilize the platform of the 30S subunit. In Trichlorobacter lovleyi (strain ATCC BAA-1151 / DSM 17278 / SZ) (Geobacter lovleyi), this protein is Small ribosomal subunit protein bS18.